A 211-amino-acid polypeptide reads, in one-letter code: ATP-dependent Clp protease proteolytic subunit (211 aa).

The Nucleophile role is filled by Ser114. Residue His139 is part of the active site.

This sequence belongs to the peptidase S14 family. As to quaternary structure, fourteen ClpP subunits assemble into 2 heptameric rings which stack back to back to give a disk-like structure with a central cavity, resembling the structure of eukaryotic proteasomes.

The protein localises to the cytoplasm. The catalysed reaction is Hydrolysis of proteins to small peptides in the presence of ATP and magnesium. alpha-casein is the usual test substrate. In the absence of ATP, only oligopeptides shorter than five residues are hydrolyzed (such as succinyl-Leu-Tyr-|-NHMec, and Leu-Tyr-Leu-|-Tyr-Trp, in which cleavage of the -Tyr-|-Leu- and -Tyr-|-Trp bonds also occurs).. Functionally, cleaves peptides in various proteins in a process that requires ATP hydrolysis. Has a chymotrypsin-like activity. Plays a major role in the degradation of misfolded proteins. This is ATP-dependent Clp protease proteolytic subunit from Pseudomonas fluorescens (strain Pf0-1).